A 630-amino-acid chain; its full sequence is A-type voltage-gated potassium channel KCND2 (630 aa).

Residues 1–184 are Cytoplasmic-facing; it reads MAAGVAAWLP…FENPHTSTMA (184 aa). Positions 2–20 are interaction with KCNIP1, KCNIP2, and other family members; it reads AAGVAAWLPFARAAAIGWM. At Thr38 the chain carries Phosphothreonine. The segment at 71–90 is interaction with KCNIP1; that stretch reads ERDFFYHPETQQYFFDRDPD. Positions 105, 111, 132, and 133 each coordinate Zn(2+). Residues 185-206 form a helical membrane-spanning segment; sequence LVFYYVTGFFIAVSVIANVVET. At 207–226 the chain is on the extracellular side; sequence VPCGSSPGHIKELPCGERYA. Residues 227 to 249 traverse the membrane as a helical segment; the sequence is VAFFCLDTACVMIFTVEYLLRLA. Over 250–256 the chain is Cytoplasmic; the sequence is AAPSRYR. A helical membrane pass occupies residues 257–281; that stretch reads FVRSVMSIIDVVAILPYYIGLVMTD. Topologically, residues 282–287 are extracellular; sequence NEDVSG. A helical; Voltage-sensor transmembrane segment spans residues 288–307; that stretch reads AFVTLRVFRVFRIFKFSRHS. Topologically, residues 308–321 are cytoplasmic; the sequence is QGLRILGYTLKSCA. The S4-S5 linker stretch occupies residues 308–321; it reads QGLRILGYTLKSCA. The helical transmembrane segment at 322–345 threads the bilayer; the sequence is SELGFLLFSLTMAIIIFATVMFYA. Residues 346-357 lie on the Extracellular side of the membrane; that stretch reads EKGSSASKFTSI. An intramembrane region (helical) is located at residues 358–369; sequence PAAFWYTIVTMT. The K(+) site is built by Thr370, Leu371, Gly372, and Tyr373. The Selectivity filter signature appears at 370-375; it reads TLGYGD. The stretch at 370 to 377 is an intramembrane region; sequence TLGYGDMV. Residues 378–380 lie on the Extracellular side of the membrane; it reads PKT. Residues 381-403 form a helical membrane-spanning segment; it reads IAGKIFGSICSLSGVLVIALPVP. The Cytoplasmic segment spans residues 404 to 630; the sequence is VIVSNFSRIY…GGNIVRVSAL (227 aa). Phosphoserine is present on Ser438. A required for dendritic targeting region spans residues 474 to 489; the sequence is FETQHHHLLHCLEKTT. An important for normal channel activation and inactivation, for interaction with KCNIP2, and probably other family members as well region spans residues 474 to 630; sequence FETQHHHLLH…GGNIVRVSAL (157 aa). Phosphoserine is present on residues Ser548, Ser552, Ser572, and Ser575. Residues 600-623 are disordered; it reads IPTPPVTTPEGDDRPESPEYSGGN. 2 positions are modified to phosphothreonine: Thr602 and Thr607. Position 616 is a phosphoserine (Ser616). The PDZ-binding signature appears at 627–630; sequence VSAL.

It belongs to the potassium channel family. D (Shal) (TC 1.A.1.2) subfamily. Kv4.2/KCND2 sub-subfamily. As to quaternary structure, homotetramer or heterotetramer with KCND1 or KCND3. Associates with the regulatory subunits KCNIP2, KCNIP3 and KCNIP4. Interacts with the regulatory subunit KCNIP1; this interaction mediates the capture of both the N- and C-terminus of KCND2, preventing N-type inactivation and stabilizing the S6 conformation, thereby accelerating closed state inactivation and recovery. Interacts with DPP10, DLG4 and DLG1. In vivo, probably exists as heteromeric complex containing variable proportions of KCND1, KCND2, KCND3, KCNIP1, KCNIP2, KCNIP3, KCNIP4, DPP6 and DPP10. The tetrameric channel can associate with up to four regulatory subunits, such as KCNIP2 or KCNIP4. Interaction with KCNIP3 promotes tetramerization and formation of a functional potassium channel. Interaction with four KCNIP4 chains does not reduce interaction with DPP10. Probably part of a complex consisting of KCNIP1, KCNIP2 isoform 3 and KCND2. Interacts with FLNA and FLNC. Interacts with NCS1/FREQ. Identified in a complex with cAMP-dependent protein kinase (PKA), CAV3, AKAP6 and KCND3 in cardiac myocytes. Interacts (via S1 and S2 helices) with DPP6; this interaction stabilizes the conformation of the S1-S2 helices and facilitates S4 conformational change, including S4 sliding up and down, thereby accelerating activation, inactivation, and recovery. Phosphorylation at Ser-438 in response to MAPK activation is increased in stimulated dendrites. Interaction with KCNIP2 and DPP6 propomtes phosphorylation by PKA at Ser-552. Phosphorylation at Ser-552 has no effect on interaction with KCNIP3, but is required for the regulation of channel activity by KCNIP3. Phosphorylation at Ser-552 leads to KCND2 internalization. Phosphorylated by MAPK in response to signaling via the metabotropic glutamate receptor GRM5. Phosphorylation at Ser-616 is required for the down-regulation of neuronal A-type currents in response to signaling via GRM5. Detected in brain cortex, hippocampus, dentate gyrus, thalamus and cerebellum. Detected in neurons from the primary visual cortex. Detected in the supraoptic nucleus in hypothalamus, in hippocampus and the habenular nucleus of the thalamus. Detected in the bed nucleus of the stria terminalis. Detected in dendritic fields in the hippocampus CA1 layer, in stratum radiatum, stratum oriens, stratum lacunosum-moleculare and stratum pyramidale. Detected in dendritic fields in the hippocampus CA3 layer and in dentate gyrus. Detected in the cerebellum granule cell layer, where it localizes at synapses. Detected in the main olfactory bulb, especially in the granule cell layer and the external plexiform layer, but also the mitral layer. Detected in heart atrium and ventricle. Detected in heart left ventricle (at protein level). Highly expressed in heart and throughout the brain, with similar levels in cortex and hypothalamus, and much higher levels in hippocampus, dentate gyrus and the habenular nucleus of the thalamus. Detected in brain, and at lower levels in heart atrium and ventricle. Detected in neurons from the bed nucleus of the stria terminalis. Detected in aorta, cardiac and smooth muscle.

The protein resides in the cell membrane. It is found in the cell projection. Its subcellular location is the dendrite. The protein localises to the synapse. It localises to the perikaryon. The protein resides in the postsynaptic cell membrane. It is found in the dendritic spine. Its subcellular location is the sarcolemma. The protein localises to the cell junction. It localises to the membrane. The protein resides in the caveola. It carries out the reaction K(+)(in) = K(+)(out). With respect to regulation, inhibited by 5 mM 4-aminopyridine (4-AP). Not inhibited by dendrotoxins and by tetraethylammonium (TEA). Inhibited by 10 mM flecainide and 20 mM quinidine. Inhibited by the heteropodatoxins HpTx(1), HpTx(2), and HpTx(3). Functionally, voltage-gated potassium channel that mediates transmembrane potassium transport in excitable membranes, primarily in the brain, but also in rodent heart. Mediates the major part of the dendritic A-type current I(SA) in brain neurons. This current is activated at membrane potentials that are below the threshold for action potentials. It regulates neuronal excitability, prolongs the latency before the first spike in a series of action potentials, regulates the frequency of repetitive action potential firing, shortens the duration of action potentials and regulates the back-propagation of action potentials from the neuronal cell body to the dendrites. Contributes to the regulation of the circadian rhythm of action potential firing in suprachiasmatic nucleus neurons, which regulates the circadian rhythm of locomotor activity. Functions downstream of the metabotropic glutamate receptor GRM5 and plays a role in neuronal excitability and in nociception mediated by activation of GRM5. Mediates the transient outward current I(to) in rodent heart left ventricle apex cells, but not in human heart, where this current is mediated by another family member. Forms tetrameric potassium-selective channels through which potassium ions pass in accordance with their electrochemical gradient. The channel alternates between opened and closed conformations in response to the voltage difference across the membrane. Can form functional homotetrameric channels and heterotetrameric channels that contain variable proportions of KCND2 and KCND3; channel properties depend on the type of pore-forming alpha subunits that are part of the channel. In vivo, membranes probably contain a mixture of heteromeric potassium channel complexes. Interaction with specific isoforms of the regulatory subunits KCNIP1, KCNIP2, KCNIP3 or KCNIP4 strongly increases expression at the cell surface and thereby increases channel activity; it modulates the kinetics of channel activation and inactivation, shifts the threshold for channel activation to more negative voltage values, shifts the threshold for inactivation to less negative voltages and accelerates recovery after inactivation. Likewise, interaction with DPP6 or DPP10 promotes expression at the cell membrane and regulates both channel characteristics and activity. Upon depolarization, the channel goes from a resting closed state (C state) to an activated but non-conducting state (C* state), from there, the channel may either inactivate (I state) or open (O state). The polypeptide is A-type voltage-gated potassium channel KCND2 (Rattus norvegicus (Rat)).